Here is a 364-residue protein sequence, read N- to C-terminus: Fructose-1,6-bisphosphatase class 1 2 (364 aa).

The Mg(2+) site is built by glutamate 99, aspartate 121, leucine 123, and aspartate 124. Residues 124–127 (DGSS) and asparagine 220 contribute to the substrate site. Residue glutamate 292 participates in Mg(2+) binding.

This sequence belongs to the FBPase class 1 family. In terms of assembly, homotetramer. It depends on Mg(2+) as a cofactor.

The protein resides in the cytoplasm. It carries out the reaction beta-D-fructose 1,6-bisphosphate + H2O = beta-D-fructose 6-phosphate + phosphate. It functions in the pathway carbohydrate biosynthesis; gluconeogenesis. This chain is Fructose-1,6-bisphosphatase class 1 2, found in Polaromonas naphthalenivorans (strain CJ2).